The following is a 101-amino-acid chain: Doublesex- and mab-3-related transcription factor 1 (101 aa).

The segment at residues 1–13 (SLIAERQRVMAAQ) is a DNA-binding region (DM). Low complexity predominate over residues 52 to 75 (CLLLESSSPTHSTSTVTTVSTSPS). The disordered stretch occupies residues 52–79 (CLLLESSSPTHSTSTVTTVSTSPSEGRM).

This sequence belongs to the DMRT family.

It localises to the nucleus. May be required for testis development. This Alligator mississippiensis (American alligator) protein is Doublesex- and mab-3-related transcription factor 1 (DMRT1).